A 235-amino-acid chain; its full sequence is MAQTLNRSLTDLGALLHLVDPTLPIGGFNHSNGLETFVQQRVVESKATLEEYVQTQLLQNWIYNDGAYLSLAFDAMNEGNFDRLCELDWQLSATKVARESREGSFKLGVRLLKIFIRYETHTLLTAYQQAIAEKRVQGYFPIVFAMVAQAMGLTKADTLYAFYYNAAVGAITNGVKLIPLSQMDGQDILFDLRGSLVQAVELSLDPDEEWLGAATLANDIRAMQHEVLYTRLYMS.

It belongs to the UreF family. UreD, UreF and UreG form a complex that acts as a GTP-hydrolysis-dependent molecular chaperone, activating the urease apoprotein by helping to assemble the nickel containing metallocenter of UreC. The UreE protein probably delivers the nickel.

It localises to the cytoplasm. Functionally, required for maturation of urease via the functional incorporation of the urease nickel metallocenter. In Haemophilus influenzae (strain PittEE), this protein is Urease accessory protein UreF.